Reading from the N-terminus, the 329-residue chain is DNA-directed RNA polymerase subunit alpha (329 aa).

The interval methionine 1–arginine 235 is alpha N-terminal domain (alpha-NTD). An alpha C-terminal domain (alpha-CTD) region spans residues phenylalanine 249–aspartate 329.

The protein belongs to the RNA polymerase alpha chain family. As to quaternary structure, homodimer. The RNAP catalytic core consists of 2 alpha, 1 beta, 1 beta' and 1 omega subunit. When a sigma factor is associated with the core the holoenzyme is formed, which can initiate transcription.

The catalysed reaction is RNA(n) + a ribonucleoside 5'-triphosphate = RNA(n+1) + diphosphate. DNA-dependent RNA polymerase catalyzes the transcription of DNA into RNA using the four ribonucleoside triphosphates as substrates. This is DNA-directed RNA polymerase subunit alpha from Pasteurella multocida (strain Pm70).